A 101-amino-acid chain; its full sequence is Long chronological lifespan protein 1 (101 aa).

The N-terminal stretch at 1-17 (MKNAALCEALPLLATCS) is a signal peptide. Ser81 is lipidated: GPI-anchor amidated serine. Positions 82–101 (FAKPSFSFFFFLLTSLLSPF) are cleaved as a propeptide — removed in mature form.

Its subcellular location is the cell membrane. The chain is Long chronological lifespan protein 1 (LCL1) from Saccharomyces cerevisiae (strain ATCC 204508 / S288c) (Baker's yeast).